A 355-amino-acid polypeptide reads, in one-letter code: Protein RecA (355 aa).

78 to 85 (GPESSGKT) contributes to the ATP binding site.

Belongs to the RecA family.

The protein resides in the cytoplasm. Can catalyze the hydrolysis of ATP in the presence of single-stranded DNA, the ATP-dependent uptake of single-stranded DNA by duplex DNA, and the ATP-dependent hybridization of homologous single-stranded DNAs. It interacts with LexA causing its activation and leading to its autocatalytic cleavage. In Rhodobacter capsulatus (Rhodopseudomonas capsulata), this protein is Protein RecA.